The sequence spans 775 residues: Endothelin-converting enzyme-like 1 (775 aa).

Topologically, residues Met1–Cys61 are cytoplasmic. The segment at Gly30–Leu52 is disordered. Positions Ser32–Leu52 are enriched in low complexity. Residues Leu62 to Leu82 form a helical; Signal-anchor for type II membrane protein membrane-spanning segment. The Lumenal segment spans residues Lys83 to Trp775. The region spanning Gly99 to Trp775 is the Peptidase M13 domain. 4 cysteine pairs are disulfide-bonded: Cys124/Cys760, Cys132/Cys720, Cys188/Cys441, and Cys649/Cys772. N-linked (GlcNAc...) asparagine glycans are attached at residues Asn255 and Asn322. His612 is a binding site for Zn(2+). Glu613 is an active-site residue. His616 serves as a coordination point for Zn(2+). An N-linked (GlcNAc...) asparagine glycan is attached at Asn656. Residue Glu672 coordinates Zn(2+). Residue Asp676 is the Proton donor of the active site.

Belongs to the peptidase M13 family. It depends on Zn(2+) as a cofactor.

The protein resides in the membrane. May contribute to the degradation of peptide hormones and be involved in the inactivation of neuronal peptides. In Mus musculus (Mouse), this protein is Endothelin-converting enzyme-like 1 (Ecel1).